Here is a 99-residue protein sequence, read N- to C-terminus: Plastocyanin (99 aa).

In terms of domain architecture, Plastocyanin-like spans 1–99 (IEVLLGSDDG…AGMVGKVTVN (99 aa)). Cu cation-binding residues include H37, C84, H87, and M92.

This sequence belongs to the plastocyanin family. It depends on Cu(2+) as a cofactor.

The protein localises to the plastid. Its subcellular location is the chloroplast thylakoid membrane. Its function is as follows. Participates in electron transfer between P700 and the cytochrome b6-f complex in photosystem I. The polypeptide is Plastocyanin (PETE) (Solanum crispum (Chilean potato-tree)).